A 100-amino-acid polypeptide reads, in one-letter code: MAKKSMIERDRKRARLITKYAAKRKNLLVEIKTATSLEDKFNLHRKLQQLPRNSAPVRSHNRCTITGRPRGYFRDFGLSRHVLREYALQGFLPGVVKASW.

Belongs to the universal ribosomal protein uS14 family. Part of the 30S ribosomal subunit.

The protein localises to the plastid. The protein resides in the chloroplast. Its function is as follows. Binds 16S rRNA, required for the assembly of 30S particles. This is Small ribosomal subunit protein uS14c from Chlorella vulgaris (Green alga).